The following is a 518-amino-acid chain: Chromosomal replication initiator protein DnaA (518 aa).

Residues 1 to 72 form a domain I, interacts with DnaA modulators region; that stretch reads MTLAEFWPLC…VREELAAGRS (72 aa). The domain II stretch occupies residues 72-180; the sequence is SAFVFKPGEG…DAEEARYEQT (109 aa). The interval 145–178 is disordered; that stretch reads EPRQAAGSASRPESAAVAKARTDAQRDAEEARYE. Over residues 164–177 the composition is skewed to basic and acidic residues; sequence ARTDAQRDAEEARY. The tract at residues 181–397 is domain III, AAA+ region; sequence NLSPDYTFDT…GAFNRVGASS (217 aa). Positions 225, 227, 228, and 229 each coordinate ATP. The domain IV, binds dsDNA stretch occupies residues 398 to 518; sequence RFMNRPVIDI…YEKLLILIQN (121 aa).

Belongs to the DnaA family. Oligomerizes as a right-handed, spiral filament on DNA at oriC.

It is found in the cytoplasm. In terms of biological role, plays an essential role in the initiation and regulation of chromosomal replication. ATP-DnaA binds to the origin of replication (oriC) to initiate formation of the DNA replication initiation complex once per cell cycle. Binds the DnaA box (a 9 base pair repeat at the origin) and separates the double-stranded (ds)DNA. Forms a right-handed helical filament on oriC DNA; dsDNA binds to the exterior of the filament while single-stranded (ss)DNA is stabiized in the filament's interior. The ATP-DnaA-oriC complex binds and stabilizes one strand of the AT-rich DNA unwinding element (DUE), permitting loading of DNA polymerase. After initiation quickly degrades to an ADP-DnaA complex that is not apt for DNA replication. Binds acidic phospholipids. The polypeptide is Chromosomal replication initiator protein DnaA (Neisseria meningitidis serogroup A / serotype 4A (strain DSM 15465 / Z2491)).